Consider the following 424-residue polypeptide: 5-methylthioadenosine/S-adenosylhomocysteine deaminase (424 aa).

Zn(2+) contacts are provided by His-60 and His-62. 2 residues coordinate substrate: Glu-89 and His-181. His-208 lines the Zn(2+) pocket. Substrate-binding residues include Glu-211 and Asp-296. Asp-296 is a binding site for Zn(2+).

This sequence belongs to the metallo-dependent hydrolases superfamily. MTA/SAH deaminase family. Requires Zn(2+) as cofactor.

It carries out the reaction S-adenosyl-L-homocysteine + H2O + H(+) = S-inosyl-L-homocysteine + NH4(+). The enzyme catalyses S-methyl-5'-thioadenosine + H2O + H(+) = S-methyl-5'-thioinosine + NH4(+). Its function is as follows. Catalyzes the deamination of 5-methylthioadenosine and S-adenosyl-L-homocysteine into 5-methylthioinosine and S-inosyl-L-homocysteine, respectively. Is also able to deaminate adenosine. The chain is 5-methylthioadenosine/S-adenosylhomocysteine deaminase from Thermococcus sibiricus (strain DSM 12597 / MM 739).